We begin with the raw amino-acid sequence, 524 residues long: Nuclear distribution protein PAC1 (524 aa).

Residues 65–90 (STVLRLQRKIIDLENEVGTLRSIVDG) adopt a coiled-coil conformation. 8 WD repeats span residues 121–160 (QQNQ…TSIP), 166–217 (AHTR…HIRT), 220–262 (GHDH…KSFT), 277–317 (NSQL…GLAL), 353–394 (IPQE…LIPH), 415–454 (GHQS…VTGS), 463–492 (GHDG…DATE), and 493–524 (EESH…KLWS).

Belongs to the WD repeat LIS1/nudF family. Self-associates. Interacts with NDL1 and dynein.

It is found in the cytoplasm. It localises to the cytoskeleton. The protein localises to the spindle pole. Positively regulates the activity of the minus-end directed microtubule motor protein dynein. Plays a central role in positioning the mitotic spindle at the bud neck during cell division. Targets cytoplasmic dynein to microtubule plus ends, thereby promoting dynein-mediated microtubule sliding along the bud cortex and consequently the movement of the mitotic spindle to the bud neck. The sequence is that of Nuclear distribution protein PAC1 from Scheffersomyces stipitis (strain ATCC 58785 / CBS 6054 / NBRC 10063 / NRRL Y-11545) (Yeast).